Reading from the N-terminus, the 534-residue chain is Bifunctional purine biosynthesis protein PurH (534 aa).

Positions 1–148 (MNTVRPIRRA…KNHQDVTIVV (148 aa)) constitute an MGS-like domain.

It belongs to the PurH family.

The catalysed reaction is (6R)-10-formyltetrahydrofolate + 5-amino-1-(5-phospho-beta-D-ribosyl)imidazole-4-carboxamide = 5-formamido-1-(5-phospho-D-ribosyl)imidazole-4-carboxamide + (6S)-5,6,7,8-tetrahydrofolate. The enzyme catalyses IMP + H2O = 5-formamido-1-(5-phospho-D-ribosyl)imidazole-4-carboxamide. The protein operates within purine metabolism; IMP biosynthesis via de novo pathway; 5-formamido-1-(5-phospho-D-ribosyl)imidazole-4-carboxamide from 5-amino-1-(5-phospho-D-ribosyl)imidazole-4-carboxamide (10-formyl THF route): step 1/1. Its pathway is purine metabolism; IMP biosynthesis via de novo pathway; IMP from 5-formamido-1-(5-phospho-D-ribosyl)imidazole-4-carboxamide: step 1/1. The sequence is that of Bifunctional purine biosynthesis protein PurH from Shewanella denitrificans (strain OS217 / ATCC BAA-1090 / DSM 15013).